Reading from the N-terminus, the 741-residue chain is MMVGTQNLGGSLPPLNSPKSYGITKPLSLAGPSSADIKRNVELEKYLVDEGLYESKDDTMRREEVLGRIDQIVKHWVKQLTQQRGYTDQMVEDANAVIFTFGSYRLGVHGPGADIDTLCVGPSYVNREEDFFIILHDILAEMEEVTELHPVPDAHVPVMKFKFQGIPIDLLYASISLLVVPQDLDISSSSVLCEVDEPTVRSLNGCRVADQILKLVPNFEHFRTTLRCLKYWAKKRGVYSNVTGFLGGVNWALLVARVCQLYPNAIPSMLVSRFFRVYTQWRWPNPVMLCAIEEDELGFPVWDRRKNHRDRYHLMPIITPAYPCMNSSYNVSQSTLRVMTEQFQFGNNILQEIELNKQHWSSLFEQYMFFEAYKNYLQVDIVAADAEDLLAWKGWVESRFRQLTLKIERDTNGMLMCHPQPNEYVDTARQFLHCAFFMGLQRAEGVGGQECQQFDIRGTVDEFRQEVNMYMFWKPGMDVFVSHVRRRQLPPFVFPNGYRRPRQSRHQNLPGGKSGEDGSVSHSGSVVERHAKRKNDSEMMDVRPEKPEKRASLSPQSLDIVSPENSAITTGWTPPVCNLRRPPSEEIEADNLNTECTELTDLARNECNSGSEQVLEVDSMAVVQECSDPAEPLGKCVTPDSVDVVACVSGQEENLDRNLRSVSISGTDSPLLPSRSCGQNRDYEGFGFPAANSDPMGKKNLYSQSGMSEDLQSNSLVSGMEKSEDRARSESFQKSQIRLLT.

Residues 101–103 (FGS), 113–116 (ADID), 114–116 (DID), aspartate 169, lysine 230, tyrosine 239, and 248–249 (GV) each bind ATP. 3 residues coordinate Mg(2+): aspartate 114, aspartate 116, and aspartate 169. The Nuclear localization signal motif lies at 485-492 (RRRQLPPF). 2 disordered regions span residues 494 to 556 (FPNG…LSPQ) and 683 to 741 (YEGF…RLLT). Residues 534-551 (KNDSEMMDVRPEKPEKRA) show a composition bias toward basic and acidic residues. Over residues 701-717 (LYSQSGMSEDLQSNSLV) the composition is skewed to polar residues. The segment covering 721–731 (EKSEDRARSES) has biased composition (basic and acidic residues). Positions 732 to 741 (FQKSQIRLLT) are enriched in polar residues.

The protein belongs to the poly(A) polymerase family. Monomer. Forms a complex with cleavage and polyadenylation specificity factor (CPSF) subunits CFIS2, FIPS3, PAPS1, PABN1, PABN2, PABN3 and FIPS5. It depends on Mg(2+) as a cofactor. Mn(2+) is required as a cofactor. As to expression, mostly expressed in flowers (very active in pollen, sepals, styles, and stigmas), cotyledons and hypocotyls, and, to a lower extent, in roots (confined to the vascular tissue in the radicle) and leaves (in the vascular tissue and leaf petioles). Barely detected in stems. Active in the primary and secondary root systems.

Its subcellular location is the nucleus. The enzyme catalyses RNA(n) + ATP = RNA(n)-3'-adenine ribonucleotide + diphosphate. In terms of biological role, essential protein. Polymerase that creates the 3'-poly(A) tail of mRNA's. Also required for the endoribonucleolytic cleavage reaction at some polyadenylation sites. May acquire specificity through interaction with a cleavage and polyadenylation specificity factor (CPSF) at its C-terminus. This chain is Nuclear poly(A) polymerase 4, found in Arabidopsis thaliana (Mouse-ear cress).